We begin with the raw amino-acid sequence, 332 residues long: Fe(3+) dicitrate transport system permease protein FecC (332 aa).

At 1 to 7 (MTAIKHP) the chain is on the cytoplasmic side. The chain crosses the membrane as a helical span at residues 8 to 28 (VLLWGLPVAALIIIFWLSLFC). At 29-64 (YSAIPVSGADATRALLPGHTPTLPEALVQNLRLPRS) the chain is on the periplasmic side. Residues 65-85 (LVAVLIGASLALAGTLLQTLT) form a helical membrane-spanning segment. Over 86-100 (HNPMASPSLLGINSG) the chain is Cytoplasmic. A helical transmembrane segment spans residues 101-121 (AALAMALTSALSPTPIAGYSL). Residue Ser-122 is a topological domain, periplasmic. The helical transmembrane segment at 123–143 (FIAACGGGVSWLLVMTAGGGF) threads the bilayer. Residues 144 to 151 (RHTHDRNK) are Cytoplasmic-facing. The helical transmembrane segment at 152–172 (LILAGIALSAFCMGLTRITLL) threads the bilayer. Residues 173–199 (LAEDHAYGIFYWLAGGVSHARWQDVWQ) are Periplasmic-facing. A helical membrane pass occupies residues 200–220 (LLPVVVTAVPVVLLLANQLNL). Residues 221-244 (LNLSDSTAHTLGVNLTRLRLVINM) lie on the Cytoplasmic side of the membrane. Residues 245-265 (LVLLLVGACVSVAGPVAFIGL) traverse the membrane as a helical segment. Topologically, residues 266–307 (LVPHLARFWAGFDQRNVLPVSMLLGATLMLLADVLARALAFP) are periplasmic. A helical transmembrane segment spans residues 308-328 (GDLPAGAVLALIGSPCFVWLV). Topologically, residues 329 to 332 (RRRG) are cytoplasmic.

The protein belongs to the binding-protein-dependent transport system permease family. FecCD subfamily. The complex is composed of two ATP-binding proteins (FecE), two transmembrane proteins (FecC and FecD) and a solute-binding protein (FecB). Interacts with FecB.

It localises to the cell inner membrane. Part of the ABC transporter complex FecBCDE involved in citrate-dependent Fe(3+) uptake. Probably responsible for the translocation of the substrate across the membrane. In Escherichia coli (strain K12), this protein is Fe(3+) dicitrate transport system permease protein FecC.